The sequence spans 129 residues: L-ectoine synthase (129 aa).

The protein belongs to the ectoine synthase family.

The catalysed reaction is (2S)-4-acetamido-2-aminobutanoate = L-ectoine + H2O. Its pathway is amine and polyamine biosynthesis; ectoine biosynthesis; L-ectoine from L-aspartate 4-semialdehyde: step 3/3. In terms of biological role, catalyzes the circularization of gamma-N-acetyl-alpha,gamma-diaminobutyric acid (ADABA) to ectoine (1,4,5,6-tetrahydro-2-methyl-4-pyrimidine carboxylic acid), which is an excellent osmoprotectant. The sequence is that of L-ectoine synthase from Mycobacterium sp. (strain KMS).